Reading from the N-terminus, the 337-residue chain is Trace amine-associated receptor 5 (337 aa).

Residues 1-38 (MRAVLLPGSGEQPTAFCYQVNGSCPRTVHPLAIQVVIY) are Extracellular-facing. An N-linked (GlcNAc...) asparagine glycan is attached at Asn21. Disulfide bonds link Cys24-Cys188 and Cys99-Cys192. The helical transmembrane segment at 39 to 59 (LACAVGVLITVLGNLFVVFAV) threads the bilayer. Residues 60 to 70 (SYFKVLHTPTN) lie on the Cytoplasmic side of the membrane. Residues 71–91 (FLLLSLALADMLLGLLVLPLS) traverse the membrane as a helical segment. The Extracellular segment spans residues 92–109 (TVRSVESCWFFGDFLCRL). Residues 110 to 130 (HTYLDTLFCLTSIFHLCFISI) traverse the membrane as a helical segment. Residues 131–154 (DRHCAICDPLLYPSKFTVRTALRY) are Cytoplasmic-facing. The helical transmembrane segment at 155–175 (IVAGWGIPAAYTAFFLYTDVV) threads the bilayer. The interval 176–189 (ERALSQWLEEMPCV) is extracellular Loop 2 (ECL2). The Extracellular segment spans residues 176–204 (ERALSQWLEEMPCVGSCQLLFNKFWGWLN). The chain crosses the membrane as a helical span at residues 205 to 225 (FPAFFVPCLIMISLYLKIFVV). Over 226–253 (ATRQAQQIRTLSQSLAGAVKRERKAAKT) the chain is Cytoplasmic. Residues 254 to 274 (LGIAVGIYLVCWLPFTVDTLV) form a helical membrane-spanning segment. The Extracellular portion of the chain corresponds to 275 to 284 (DSLLNFITPP). The helical transmembrane segment at 285-307 (LVFDIFIWFAYFNSACNPIIYVF) threads the bilayer. Residues 308–337 (SYRWFRKALKLLLSREIFSPRTPTVDLYHD) are Cytoplasmic-facing.

This sequence belongs to the G-protein coupled receptor 1 family. In terms of tissue distribution, specifically expressed in neurons of the olfactory epithelium, to discrete glomeruli predominantly localized to a confined bulb region. Present in the dorsal area of the main olfactory epithelium. Also present in the limbic brain areas receiving projection from the olfactory system and involved in the regulation of emotions. Also expressed in some brain regions outside the olfactory epithelium, such as the hippocampus, cerebellum, cortex, raphe nuclei, hypothalamus, and habenula.

The protein resides in the cell membrane. Inhibited by 1-[(5,5- diphenyloxolan-2-yl)methyl]-4-(2-methoxyphenyl)piperazine and N-[(2,2-diphenyl-1,3-dioxolan-4-yl)methyl]-2-(2- methoxyphenoxy)ethan-1-amine small molecules. Olfactory receptor specific for trimethylamine, a trace amine enriched in the urine of male mice, playing a role in social behavior. Also activated by N-methylpiperidine. Trimethylamine is present at high concentration in the urine of male mice after puberty and acts as an attractant. Trimethylamine-binding causes a conformation change that triggers signaling via G(s)-class of G alpha proteins (GNAL or GNAS). Also required to provide olfactory input into limbic brain areas to regulate emotional behaviors likely via modulation of the serotonin system. This is Trace amine-associated receptor 5 from Mus musculus (Mouse).